Reading from the N-terminus, the 181-residue chain is Crossover junction endodeoxyribonuclease RuvC (181 aa).

Active-site residues include aspartate 7, glutamate 67, and aspartate 139. 3 residues coordinate Mg(2+): aspartate 7, glutamate 67, and aspartate 139.

Belongs to the RuvC family. As to quaternary structure, homodimer which binds Holliday junction (HJ) DNA. The HJ becomes 2-fold symmetrical on binding to RuvC with unstacked arms; it has a different conformation from HJ DNA in complex with RuvA. In the full resolvosome a probable DNA-RuvA(4)-RuvB(12)-RuvC(2) complex forms which resolves the HJ. Requires Mg(2+) as cofactor.

It localises to the cytoplasm. The enzyme catalyses Endonucleolytic cleavage at a junction such as a reciprocal single-stranded crossover between two homologous DNA duplexes (Holliday junction).. Functionally, the RuvA-RuvB-RuvC complex processes Holliday junction (HJ) DNA during genetic recombination and DNA repair. Endonuclease that resolves HJ intermediates. Cleaves cruciform DNA by making single-stranded nicks across the HJ at symmetrical positions within the homologous arms, yielding a 5'-phosphate and a 3'-hydroxyl group; requires a central core of homology in the junction. The consensus cleavage sequence is 5'-(A/T)TT(C/G)-3'. Cleavage occurs on the 3'-side of the TT dinucleotide at the point of strand exchange. HJ branch migration catalyzed by RuvA-RuvB allows RuvC to scan DNA until it finds its consensus sequence, where it cleaves and resolves the cruciform DNA. This chain is Crossover junction endodeoxyribonuclease RuvC, found in Cupriavidus taiwanensis (strain DSM 17343 / BCRC 17206 / CCUG 44338 / CIP 107171 / LMG 19424 / R1) (Ralstonia taiwanensis (strain LMG 19424)).